The chain runs to 971 residues: MSAGQAPKEIGEISFGLMDPEEYRDMSATKVITADTYDDDGFPIDMGLMDPRLGVIDPGLECKTCGQRSGGCNGHFGHIELAAPVIHVGFSKLIRRLLRGTCRECASLLLTEEEKDEYRENLDRTRSLRQDVSDVMTAAIREARKKDHCPHCGEVQYDVKHEKPTTYYEVQQVLASDYSERIAASMQPDEDEDDAGVSPQELAEQTDIDISRINEILSGEFRPRREDREAIETAIGADLTTEDMNKLMPSDIRDWFEDIPGEDLEALGVNSDRSRPEWMILTVLPVPPVTARPSITLDNGQRSEDDLTHKLVDIIRINQRFMENREAGAPQLIIEDLWELLQYHVTTFMDNEISGTPPARHRSGRPLKTLSQRLKGKEGRFRGSLSGKRVNFSARTVISPDPTLSLNEVGVPDRVATEMTQTMVVNEQNLERARRYVRNGPEGHPGANYVTRPDGRRVRVTEKVCEELAERVEPGWEVQRHLIDGDIIIFNRQPSLHRMSIMAHEVVVMPYKTFRLNTVVCPPYNADFDGDEMNMHALQNEEARAEARVLMRVQEQILSPRFGENIIGAIQDHISGTYLLTNDNPRFNETQASDLLRQTRIDELPAAAGTDEDGDQYWTGHQIFSELLPDDLSLEFTGTTGDTVVIEDGQLLEGTIADDEVGEYGSEIVDTITKVHGNTRARIFINEVASLAMRSIMHFGFSIGIDDETVSTEARERIDEAIQSAYDRVQELIETYENGDLESLPGRTVDETLEMKIMQTLGKARDSAGDVAEENFDEDNPAVVMANSGARGSMLNLTQMAGCVGQQAVRGERINRGYEDRTLSHFAPNDLSSEAHGFVENSYTSGLTPKEFFFHAMGGREGLVDTAVRTSKSGYLQRRLINALSELETQYDGTVRDTSDTIVQFEFGEDGTSPVQVSSNEEVDIDVEHVADRILNSEFDSDTQKAEFLEVEEPPTNLSEHGAAWEVESDD.

M1 is modified (blocked amino end (Met)). C62, C65, C72, H75, C102, C105, C149, and C152 together coordinate Zn(2+). A disordered region spans residues 185 to 204; the sequence is SMQPDEDEDDAGVSPQELAE. 3 residues coordinate Mg(2+): D527, D529, and D531. A disordered region spans residues 951-971; sequence VEEPPTNLSEHGAAWEVESDD.

The protein belongs to the RNA polymerase beta' chain family. In terms of assembly, part of the RNA polymerase complex. Requires Mg(2+) as cofactor. It depends on Zn(2+) as a cofactor. In terms of processing, the N-terminus is blocked.

Its subcellular location is the cytoplasm. The enzyme catalyses RNA(n) + a ribonucleoside 5'-triphosphate = RNA(n+1) + diphosphate. In terms of biological role, DNA-dependent RNA polymerase (RNAP) catalyzes the transcription of DNA into RNA using the four ribonucleoside triphosphates as substrates. Forms the clamp head domain. This Halobacterium salinarum (strain ATCC 29341 / DSM 671 / R1) protein is DNA-directed RNA polymerase subunit Rpo1N.